The following is a 334-amino-acid chain: L-lactate dehydrogenase (334 aa).

The tract at residues 1–22 (MASTKGKLIHEMVPSKERDPPH) is disordered. Basic and acidic residues predominate over residues 8–22 (LIHEMVPSKERDPPH). NAD(+)-binding positions include 31-59 (GQVGMAAAISVLLRDLADELALVDVVEDR) and Arg-101. Arg-108, Asn-140, and Arg-171 together coordinate substrate. Position 140 (Asn-140) interacts with NAD(+). His-195 functions as the Proton acceptor in the catalytic mechanism. Residue Thr-250 coordinates substrate.

It belongs to the LDH/MDH superfamily. LDH family. Homotetramer.

Its subcellular location is the cytoplasm. It catalyses the reaction (S)-lactate + NAD(+) = pyruvate + NADH + H(+). Its pathway is fermentation; pyruvate fermentation to lactate; (S)-lactate from pyruvate: step 1/1. The chain is L-lactate dehydrogenase from Petromyzon marinus (Sea lamprey).